The chain runs to 241 residues: uncharacterized protein (241 aa).

This is an uncharacterized protein from Saccharolobus islandicus (Sulfolobus islandicus).